The following is a 199-amino-acid chain: V-type ATP synthase subunit E (199 aa).

The protein belongs to the V-ATPase E subunit family.

Its function is as follows. Produces ATP from ADP in the presence of a proton gradient across the membrane. This Borreliella afzelii (strain PKo) (Borrelia afzelii) protein is V-type ATP synthase subunit E.